We begin with the raw amino-acid sequence, 263 residues long: Protein M1627_2099 (263 aa).

Belongs to the CinA family.

In Saccharolobus islandicus (strain M.16.27) (Sulfolobus islandicus), this protein is Protein M1627_2099.